The primary structure comprises 634 residues: Chaperone protein HtpG (634 aa).

An a; substrate-binding region spans residues 1–339; it reads MAQETMSFQA…SADLPLNVSR (339 aa). The tract at residues 340–559 is b; that stretch reads EILQESRDVK…DGEMSGYLQR (220 aa). Residues 560–634 form a c region; the sequence is MLKAAGQQAP…ALLLARANEA (75 aa).

Belongs to the heat shock protein 90 family. As to quaternary structure, homodimer.

The protein resides in the cytoplasm. In terms of biological role, molecular chaperone. Has ATPase activity. This is Chaperone protein HtpG from Paraburkholderia xenovorans (strain LB400).